A 169-amino-acid chain; its full sequence is Cilia- and flagella-associated protein 276 (169 aa).

Disordered stretches follow at residues 26–45 (SKKLPYKNPTHLAQQQEPWS) and 150–169 (HTAATNGGYSRKKDGGFFST). A compositionally biased stretch (polar residues) spans 36–45 (HLAQQQEPWS). Over residues 160–169 (RKKDGGFFST) the composition is skewed to basic and acidic residues.

In terms of assembly, microtubule inner protein component of sperm flagellar doublet microtubules. As to expression, expressed in cerebrum, cerebellum, gastrocnemius muscle, spinal cord and lung tissues.

It localises to the cytoplasm. Its subcellular location is the cytoskeleton. It is found in the flagellum axoneme. The protein resides in the cilium axoneme. Microtubule inner protein (MIP) part of the dynein-decorated doublet microtubules (DMTs) in cilia axoneme, which is required for motile cilia beating. May play an important role for the maintenance of myelin-axon integrity. May affect intracellular Ca(2+) homeostasis. This is Cilia- and flagella-associated protein 276 from Homo sapiens (Human).